The sequence spans 70 residues: Large ribosomal subunit protein bL31 (70 aa).

4 residues coordinate Zn(2+): C16, C18, C37, and C40.

The protein belongs to the bacterial ribosomal protein bL31 family. Type A subfamily. As to quaternary structure, part of the 50S ribosomal subunit. Zn(2+) serves as cofactor.

In terms of biological role, binds the 23S rRNA. In Desulfovibrio desulfuricans (strain ATCC 27774 / DSM 6949 / MB), this protein is Large ribosomal subunit protein bL31.